Here is a 427-residue protein sequence, read N- to C-terminus: Adenylosuccinate synthetase (427 aa).

GTP contacts are provided by residues 12 to 18 and 40 to 42; these read GDEGKGK and GHT. D13 (proton acceptor) is an active-site residue. Residues D13 and G40 each contribute to the Mg(2+) site. Residues 13–16, 38–41, T128, R142, Q223, T238, and R302 each bind IMP; these read DEGK and NAGH. The active-site Proton donor is H41. A substrate-binding site is contributed by 298–304; that stretch reads VTTGRDR. Residues R304, 330–332, and 412–414 contribute to the GTP site; these read KLD and GVG.

Belongs to the adenylosuccinate synthetase family. In terms of assembly, homodimer. Requires Mg(2+) as cofactor.

It is found in the cytoplasm. The enzyme catalyses IMP + L-aspartate + GTP = N(6)-(1,2-dicarboxyethyl)-AMP + GDP + phosphate + 2 H(+). Its pathway is purine metabolism; AMP biosynthesis via de novo pathway; AMP from IMP: step 1/2. In terms of biological role, plays an important role in the de novo pathway of purine nucleotide biosynthesis. Catalyzes the first committed step in the biosynthesis of AMP from IMP. This is Adenylosuccinate synthetase from Streptomyces griseus subsp. griseus (strain JCM 4626 / CBS 651.72 / NBRC 13350 / KCC S-0626 / ISP 5235).